An 87-amino-acid chain; its full sequence is UPF0512 protein B (87 aa).

It belongs to the UPF0512 family.

This Dictyostelium discoideum (Social amoeba) protein is UPF0512 protein B.